The following is a 301-amino-acid chain: Ribosomal protein L11 methyltransferase (301 aa).

Thr146, Gly167, Asp189, and Asn237 together coordinate S-adenosyl-L-methionine.

It belongs to the methyltransferase superfamily. PrmA family.

It localises to the cytoplasm. It carries out the reaction L-lysyl-[protein] + 3 S-adenosyl-L-methionine = N(6),N(6),N(6)-trimethyl-L-lysyl-[protein] + 3 S-adenosyl-L-homocysteine + 3 H(+). Methylates ribosomal protein L11. The protein is Ribosomal protein L11 methyltransferase of Prochlorococcus marinus (strain MIT 9303).